Here is a 418-residue protein sequence, read N- to C-terminus: MIFDKGNVEDFDKELWDAIHAEEERQEHHIELIASENMVSKAVMAAQGSVLTNKYAEGYPGNRYYGGTECVDIVETLAIERAKKLFGAAFANVQAHSGSQANAAAYMALIEAGDTVLGMDLAAGGHLTHGSPVNFSGKTYHFVGYSVDADTEMLNYEAILEQAKAVQPKLIVAGASAYSRSIDFEKFRAIADHVGAYLMVDMAHIAGLVAAGVHPSPVPYAHIVTSTTHKTLRGPRGGLILTNDEALAKKINSAVFPGLQGGPLEHVIAAKAVAFKEALDPAFKDYAQAIIDNTAAMAAVFAQDDRFRLISGGTDNHVFLVDVTKVIANGKLAQILLDEVNITLNKNAIPFETLSPFKTSGIRIGCAAITSRGMGVKESQTIAHLIIKALVNHNQTVILEEVRQEVRQLTDAFPLYKK.

(6S)-5,6,7,8-tetrahydrofolate contacts are provided by residues L121 and 125–127; that span reads GHL. At K230 the chain carries N6-(pyridoxal phosphate)lysine. Residue 355 to 357 coordinates (6S)-5,6,7,8-tetrahydrofolate; sequence SPF.

It belongs to the SHMT family. As to quaternary structure, homodimer. The cofactor is pyridoxal 5'-phosphate.

It is found in the cytoplasm. The catalysed reaction is (6R)-5,10-methylene-5,6,7,8-tetrahydrofolate + glycine + H2O = (6S)-5,6,7,8-tetrahydrofolate + L-serine. It participates in one-carbon metabolism; tetrahydrofolate interconversion. It functions in the pathway amino-acid biosynthesis; glycine biosynthesis; glycine from L-serine: step 1/1. Functionally, catalyzes the reversible interconversion of serine and glycine with tetrahydrofolate (THF) serving as the one-carbon carrier. This reaction serves as the major source of one-carbon groups required for the biosynthesis of purines, thymidylate, methionine, and other important biomolecules. Also exhibits THF-independent aldolase activity toward beta-hydroxyamino acids, producing glycine and aldehydes, via a retro-aldol mechanism. This Streptococcus pyogenes serotype M6 (strain ATCC BAA-946 / MGAS10394) protein is Serine hydroxymethyltransferase.